A 393-amino-acid chain; its full sequence is MGRGACVPSAASGAGDRARQLGAVLGALCLFPALVLLAWPGTPANGAGARVAQGDAAPQTSGVLASGSLGPPHPPVPRRRRYTLTPARLRWEHFNLTYKILSFPRNLLSPSETRRGLAAAFRMWSDVSPFSFREVAPEQPSDLRIGFYPVNHTDCLVSPLHHCFDGPTGELAHAFFPPHGGIHFDDSEYWVLGRTRYSWKKGVWLTDLVHVAAHEIGHALGLMHSQHGRALMHLNATLRGWKALSQDELWGLHRLYGCLDRLFVCASWARRGFCDTRRRLMKRLCPSSCDFCYEFPFPTVAATPPPPRTKTKLVPEGRNVTFRCGQKILHKKGKVYWYKDQEPLEFSYPGYLALGEAHLSIIANAINEGTYTCVVRRRQRVLSTYSWRIRVRS.

Over 1 to 20 (MGRGACVPSAASGAGDRARQ) the chain is Cytoplasmic. The propeptide occupies 1–81 (MGRGACVPSA…PHPPVPRRRR (81 aa)). Residues 21 to 41 (LGAVLGALCLFPALVLLAWPG) form a helical; Signal-anchor for type II membrane protein membrane-spanning segment. Residues 42-393 (TPANGAGARV…TYSWRIRVRS (352 aa)) are Lumenal-facing. The disordered stretch occupies residues 60–79 (TSGVLASGSLGPPHPPVPRR). Residues Asn-95 and Asn-151 are each glycosylated (N-linked (GlcNAc...) asparagine). His-214 lines the Zn(2+) pocket. Glu-215 is a catalytic residue. Zn(2+)-binding residues include His-218 and His-224. Residue Asn-235 is glycosylated (N-linked (GlcNAc...) asparagine). The ShKT domain maps to 258 to 292 (CLDRLFVCASWARRGFCDTRRRLMKRLCPSSCDFC). 3 disulfide bridges follow: Cys-258–Cys-292, Cys-265–Cys-285, and Cys-274–Cys-289. The Ig-like C2-type domain occupies 298–383 (PTVAATPPPP…VVRRRQRVLS (86 aa)). A glycan (N-linked (GlcNAc...) asparagine) is linked at Asn-319. Cys-324 and Cys-373 form a disulfide bridge.

It belongs to the peptidase M10A family. It depends on Zn(2+) as a cofactor. Post-translationally, N-glycosylated. Proteolytic cleavage might yield an active form.

It is found in the membrane. It localises to the endoplasmic reticulum membrane. Protease. May regulate the surface expression of some potassium channels by retaining them in the endoplasmic reticulum. The chain is Matrix metalloproteinase-23 (MMP23) from Bos taurus (Bovine).